We begin with the raw amino-acid sequence, 179 residues long: Warthog protein 3 (179 aa).

A signal peptide spans 1 to 19; that stretch reads MLYHVEMFTIILLFGFSLA. 2 N-linked (GlcNAc...) asparagine glycosylation sites follow: Asn-52 and Asn-147.

As to expression, expressed in the trinucleate pharyngeal gland cell g1, seam cells and hypodermis.

It localises to the secreted. Intercellular signal essential for a variety of patterning events during development. The chain is Warthog protein 3 (wrt-3) from Caenorhabditis elegans.